Consider the following 253-residue polypeptide: Small ribosomal subunit protein uS3 (253 aa).

One can recognise a KH type-2 domain in the interval 21 to 92 (LNEFLTRELA…SVELYAEKVA (72 aa)). Residues 211 to 253 (VEPKDEILPTTPISEQKGGKPDPQVPQQPPQQPPAMPPPVPTA) are disordered. Pro residues predominate over residues 233 to 253 (PQVPQQPPQQPPAMPPPVPTA).

It belongs to the universal ribosomal protein uS3 family.

It is found in the cytoplasm. The protein localises to the nucleus. Its subcellular location is the nucleolus. The protein resides in the mitochondrion inner membrane. It localises to the cytoskeleton. It is found in the spindle. The enzyme catalyses 2'-deoxyribonucleotide-(2'-deoxyribose 5'-phosphate)-2'-deoxyribonucleotide-DNA = a 3'-end 2'-deoxyribonucleotide-(2,3-dehydro-2,3-deoxyribose 5'-phosphate)-DNA + a 5'-end 5'-phospho-2'-deoxyribonucleoside-DNA + H(+). Functionally, component of the small ribosomal subunit. The ribosome is a large ribonucleoprotein complex responsible for the synthesis of proteins in the cell. Has endonuclease activity and plays a role in repair of damaged DNA. Also involved in other processes including regulation of transcription, translation of its cognate mRNA, spindle formation and chromosome movement during mitosis, and apoptosis. This chain is Small ribosomal subunit protein uS3 (RPS3), found in Ambystoma mexicanum (Axolotl).